Reading from the N-terminus, the 263-residue chain is Thiazole synthase (263 aa).

Residue Lys102 is the Schiff-base intermediate with DXP of the active site. 1-deoxy-D-xylulose 5-phosphate is bound by residues Gly164, 190 to 191 (AG), and 212 to 213 (NT).

Belongs to the ThiG family. Homotetramer. Forms heterodimers with either ThiH or ThiS.

It is found in the cytoplasm. The catalysed reaction is [ThiS sulfur-carrier protein]-C-terminal-Gly-aminoethanethioate + 2-iminoacetate + 1-deoxy-D-xylulose 5-phosphate = [ThiS sulfur-carrier protein]-C-terminal Gly-Gly + 2-[(2R,5Z)-2-carboxy-4-methylthiazol-5(2H)-ylidene]ethyl phosphate + 2 H2O + H(+). The protein operates within cofactor biosynthesis; thiamine diphosphate biosynthesis. In terms of biological role, catalyzes the rearrangement of 1-deoxy-D-xylulose 5-phosphate (DXP) to produce the thiazole phosphate moiety of thiamine. Sulfur is provided by the thiocarboxylate moiety of the carrier protein ThiS. In vitro, sulfur can be provided by H(2)S. The polypeptide is Thiazole synthase (Helicobacter hepaticus (strain ATCC 51449 / 3B1)).